Reading from the N-terminus, the 467-residue chain is Sugar transporter ERD6-like 11 (467 aa).

12 consecutive transmembrane segments (helical) span residues 26-46, 75-95, 105-125, 128-148, 155-177, 183-203, 266-286, 301-321, 328-348, 359-379, 402-422, and 428-448; these read ITAC…SYGC, FLNV…VILG, FFCV…WLDL, ISLG…IAEI, GAFT…FFGT, VMAV…FFIP, LVVG…GITY, LGSM…LILV, PLLL…GVSF, LIPI…AFGI, IVAL…NFMF, and GTFY…WMLV.

Belongs to the major facilitator superfamily. Sugar transporter (TC 2.A.1.1) family.

It localises to the membrane. In terms of biological role, sugar transporter. The chain is Sugar transporter ERD6-like 11 from Arabidopsis thaliana (Mouse-ear cress).